We begin with the raw amino-acid sequence, 213 residues long: Putative protein Brevis radix-like 3 (213 aa).

Residues 7-27 form a disordered region; sequence CSSKEGGEDGSRGAATPHGRD. In terms of domain architecture, BRX spans 158–213; sequence REWTAQVEPGVQITFVTLPGGGNDLKRIRFSRERFGEDRAKVWWEHNRDRIQAQYL.

Belongs to the BRX family.

It localises to the nucleus. The chain is Putative protein Brevis radix-like 3 (BRXL3) from Oryza sativa subsp. japonica (Rice).